We begin with the raw amino-acid sequence, 445 residues long: Argininosuccinate synthase (445 aa).

ATP is bound by residues 17–25 (AFSGGLDTS) and Ala-43. An L-citrulline-binding site is contributed by Tyr-99. Residues Gly-129 and Thr-131 each contribute to the ATP site. Residues Thr-131, Asn-135, and Asp-136 each coordinate L-aspartate. Asn-135 lines the L-citrulline pocket. Asp-136 serves as a coordination point for ATP. The L-citrulline site is built by Arg-139 and Ser-192. Residue Asp-194 participates in ATP binding. Positions 201, 203, and 280 each coordinate L-citrulline.

This sequence belongs to the argininosuccinate synthase family. Type 2 subfamily. In terms of assembly, homotetramer.

Its subcellular location is the cytoplasm. The enzyme catalyses L-citrulline + L-aspartate + ATP = 2-(N(omega)-L-arginino)succinate + AMP + diphosphate + H(+). It participates in amino-acid biosynthesis; L-arginine biosynthesis; L-arginine from L-ornithine and carbamoyl phosphate: step 2/3. The polypeptide is Argininosuccinate synthase (Burkholderia cenocepacia (strain HI2424)).